The chain runs to 1674 residues: Kinesin-like protein KIF21A (1674 aa).

The residue at position 1 (methionine 1) is an N-acetylmethionine. One can recognise a Kinesin motor domain in the interval 9-371 (SVRVAVRIRP…LKYANRARNI (363 aa)). Residue 88-95 (GQTGAGKT) participates in ATP binding. Positions 365–575 (ANRARNIKNK…NREERSVAGK (211 aa)) form a coiled coil. Serine 524 bears the Phosphoserine mark. Disordered regions lie at residues 556–641 (KKRL…DEKA), 779–804 (EEQE…DQRK), and 841–881 (SDKV…AQQK). Residues 560–597 (QKLEESNREERSVAGKEDNTDTDQEKKEEKGVSERENN) are compositionally biased toward basic and acidic residues. Over residues 598 to 637 (ELEVEESQEVSDHEDEEEEEEEEEDDIDGGESSDESDSES) the composition is skewed to acidic residues. The span at 851–865 (KLSSSDAPAQDTGSS) shows a compositional bias: polar residues. 2 coiled-coil regions span residues 931-1019 (TDII…AKEE) and 1053-1083 (LQAA…NQLL). The interval 1116–1138 (VEDSTDEDAPLNSPGSEGSTLSS) is disordered. Polar residues predominate over residues 1128-1138 (SPGSEGSTLSS). Positions 1146–1167 (EVKPKNKARRRTTTQMELLYAD) are interaction with KANK1 and KANK2. Composition is skewed to polar residues over residues 1170–1179 (ELASDTSTGD) and 1196–1205 (GMNTETSGTS). A disordered region spans residues 1170–1318 (ELASDTSTGD…SSLSEVHRSS (149 aa)). A phosphoserine mark is found at serine 1212, serine 1225, serine 1229, and serine 1239. Residues 1245–1262 (KAYEKAEKSKAKEQKHSD) show a composition bias toward basic and acidic residues. The segment covering 1288 to 1297 (NRLTVSQGNT) has biased composition (polar residues). 7 WD repeats span residues 1345 to 1382 (GHTK…EIMS), 1385 to 1423 (GHPN…KCIR), 1449 to 1487 (SGEN…STGK), 1490 to 1532 (GHLG…LGTV), 1541 to 1578 (PHYD…LLQQ), 1582 to 1621 (AHKD…PVGE), and 1624 to 1661 (GHDS…DGQI). Position 1662 is a phosphoserine (serine 1662). A Phosphothreonine modification is found at threonine 1664. Serine 1673 is subject to Phosphoserine.

It belongs to the TRAFAC class myosin-kinesin ATPase superfamily. Kinesin family. As to quaternary structure, part of a cortical microtubule stabilization complex (CMSC) composed of KANK1, PPFIA1, PPFIBP1, ERC1/ELKS, PHLDB2/LL5beta, CLASPs, KIF21A and possibly additional interactors; within CMSCs KANK1 and PHLDB2/LL5beta seem to be the core components for recruiting microtubule-binding proteins KIF21A and CLASPs, whereas PPFIA1, PPFIBP1 and ERC1/ELKS serve as scaffolds for protein clustering. Interacts (via residues 1146-1167) with KANK1 (via ankyrin repeats 1-5) and KANK2 (via ankyrin repeats 1-5).

It localises to the cytoplasm. It is found in the cytoskeleton. The protein resides in the cell cortex. Its subcellular location is the cell projection. The protein localises to the axon. It localises to the dendrite. It is found in the growth cone. Its function is as follows. Processive microtubule plus-end directed motor protein involved in neuronal axon guidance. Is recruited by KANK1 to cortical microtubule stabilizing complexes (CMSCs) at focal adhesions (FAs) rims where it promotes microtubule capture and stability. Controls microtubule polymerization rate at axonal growth cones and suppresses microtubule growth without inducing microtubule disassembly once it reaches the cell cortex. The chain is Kinesin-like protein KIF21A (KIF21A) from Homo sapiens (Human).